A 465-amino-acid chain; its full sequence is Lactaldehyde dehydrogenase (465 aa).

220-225 (GSVEVG) is an NAD(+) binding site. Active-site residues include Glu-240 and Cys-274.

This sequence belongs to the aldehyde dehydrogenase family. Homotetramer.

The enzyme catalyses (S)-lactaldehyde + NAD(+) + H2O = (S)-lactate + NADH + 2 H(+). The protein operates within cofactor biosynthesis; coenzyme F420 biosynthesis. In terms of biological role, involved in F420 biosynthesis through the oxidation of lactaldehyde to lactate. The protein is Lactaldehyde dehydrogenase of Methanococcus maripaludis (strain DSM 14266 / JCM 13030 / NBRC 101832 / S2 / LL).